The sequence spans 253 residues: MRYLKRITIYISLLILVSGCGNSKEAEIKQNFNKTLSMYPIKNLENFYDKEGYRDEEFDKKDKGTWIVHSEMTIEPKGKSMETRGMVLYINRNTRTTKGYYFINEITDDSNGRPKDDEKRYPVKMEHNKIIPTKPIPNDKLKKEIENFKFFVQYANFKDINDYKNGDISYNPNVPSYSAKYQLNNNDYNVKQLRKRYDIPTKQAPKLLLKGDGDLKGSSVGSKNLEFTFVENKEENIFFTDAVQFTPSENDES.

Residues 1–19 (MRYLKRITIYISLLILVSG) form the signal peptide. A lipid anchor (N-palmitoyl cysteine) is attached at Cys-20. The S-diacylglycerol cysteine moiety is linked to residue Cys-20.

This sequence belongs to the staphylococcal tandem lipoprotein family.

Its subcellular location is the cell membrane. This is an uncharacterized protein from Staphylococcus epidermidis (strain ATCC 12228 / FDA PCI 1200).